Consider the following 237-residue polypeptide: tRNA (guanine-N(7)-)-methyltransferase (237 aa).

S-adenosyl-L-methionine contacts are provided by E68, E93, D120, and D143. D143 is an active-site residue. Substrate contacts are provided by residues K147, D179, and 216–219; that span reads TKFE.

The protein belongs to the class I-like SAM-binding methyltransferase superfamily. TrmB family.

It catalyses the reaction guanosine(46) in tRNA + S-adenosyl-L-methionine = N(7)-methylguanosine(46) in tRNA + S-adenosyl-L-homocysteine. It participates in tRNA modification; N(7)-methylguanine-tRNA biosynthesis. Catalyzes the formation of N(7)-methylguanine at position 46 (m7G46) in tRNA. The polypeptide is tRNA (guanine-N(7)-)-methyltransferase (Shewanella halifaxensis (strain HAW-EB4)).